The primary structure comprises 246 residues: 3-deoxy-manno-octulosonate cytidylyltransferase (246 aa).

Belongs to the KdsB family.

It is found in the cytoplasm. It catalyses the reaction 3-deoxy-alpha-D-manno-oct-2-ulosonate + CTP = CMP-3-deoxy-beta-D-manno-octulosonate + diphosphate. It functions in the pathway nucleotide-sugar biosynthesis; CMP-3-deoxy-D-manno-octulosonate biosynthesis; CMP-3-deoxy-D-manno-octulosonate from 3-deoxy-D-manno-octulosonate and CTP: step 1/1. The protein operates within bacterial outer membrane biogenesis; lipopolysaccharide biosynthesis. Functionally, activates KDO (a required 8-carbon sugar) for incorporation into bacterial lipopolysaccharide in Gram-negative bacteria. In Rickettsia peacockii (strain Rustic), this protein is 3-deoxy-manno-octulosonate cytidylyltransferase.